The sequence spans 483 residues: Glutamate--tRNA ligase (483 aa).

The 'HIGH' region signature appears at 11-21 (PSPTGLLHIGN). The 'KMSKS' region signature appears at 255–259 (KLSKR). Position 258 (Lys258) interacts with ATP.

The protein belongs to the class-I aminoacyl-tRNA synthetase family. Glutamate--tRNA ligase type 1 subfamily. As to quaternary structure, monomer.

The protein localises to the cytoplasm. The catalysed reaction is tRNA(Glu) + L-glutamate + ATP = L-glutamyl-tRNA(Glu) + AMP + diphosphate. Functionally, catalyzes the attachment of glutamate to tRNA(Glu) in a two-step reaction: glutamate is first activated by ATP to form Glu-AMP and then transferred to the acceptor end of tRNA(Glu). The sequence is that of Glutamate--tRNA ligase from Lactococcus lactis subsp. cremoris (strain MG1363).